Consider the following 339-residue polypeptide: Tryptophan--tRNA ligase (339 aa).

ATP is bound by residues Q11–T13 and G19–N20. A 'HIGH' region motif is present at residues P12–N20. D135 provides a ligand contact to L-tryptophan. ATP is bound by residues G147 to D149, I191, and K200 to S204. A 'KMSKS' region motif is present at residues K200–S204.

It belongs to the class-I aminoacyl-tRNA synthetase family. In terms of assembly, homodimer.

Its subcellular location is the cytoplasm. The enzyme catalyses tRNA(Trp) + L-tryptophan + ATP = L-tryptophyl-tRNA(Trp) + AMP + diphosphate + H(+). Catalyzes the attachment of tryptophan to tRNA(Trp). This is Tryptophan--tRNA ligase from Prochlorococcus marinus (strain SARG / CCMP1375 / SS120).